A 167-amino-acid chain; its full sequence is SsrA-binding protein (167 aa).

It belongs to the SmpB family.

Its subcellular location is the cytoplasm. Its function is as follows. Required for rescue of stalled ribosomes mediated by trans-translation. Binds to transfer-messenger RNA (tmRNA), required for stable association of tmRNA with ribosomes. tmRNA and SmpB together mimic tRNA shape, replacing the anticodon stem-loop with SmpB. tmRNA is encoded by the ssrA gene; the 2 termini fold to resemble tRNA(Ala) and it encodes a 'tag peptide', a short internal open reading frame. During trans-translation Ala-aminoacylated tmRNA acts like a tRNA, entering the A-site of stalled ribosomes, displacing the stalled mRNA. The ribosome then switches to translate the ORF on the tmRNA; the nascent peptide is terminated with the 'tag peptide' encoded by the tmRNA and targeted for degradation. The ribosome is freed to recommence translation, which seems to be the essential function of trans-translation. This Stenotrophomonas maltophilia (strain K279a) protein is SsrA-binding protein.